A 401-amino-acid polypeptide reads, in one-letter code: Dual-specificity RNA methyltransferase RlmN (401 aa).

Residue glutamate 114 is the Proton acceptor of the active site. The 246-residue stretch at 120-365 (DKGRGTLCVS…TMVRRTRGDD (246 aa)) folds into the Radical SAM core domain. The cysteines at positions 127 and 370 are disulfide-linked. [4Fe-4S] cluster is bound by residues cysteine 134, cysteine 138, and cysteine 141. Residues 187-188 (GE), serine 219, 241-243 (SLH), and asparagine 327 contribute to the S-adenosyl-L-methionine site. Cysteine 370 serves as the catalytic S-methylcysteine intermediate.

Belongs to the radical SAM superfamily. RlmN family. It depends on [4Fe-4S] cluster as a cofactor.

It is found in the cytoplasm. It carries out the reaction adenosine(2503) in 23S rRNA + 2 reduced [2Fe-2S]-[ferredoxin] + 2 S-adenosyl-L-methionine = 2-methyladenosine(2503) in 23S rRNA + 5'-deoxyadenosine + L-methionine + 2 oxidized [2Fe-2S]-[ferredoxin] + S-adenosyl-L-homocysteine. The enzyme catalyses adenosine(37) in tRNA + 2 reduced [2Fe-2S]-[ferredoxin] + 2 S-adenosyl-L-methionine = 2-methyladenosine(37) in tRNA + 5'-deoxyadenosine + L-methionine + 2 oxidized [2Fe-2S]-[ferredoxin] + S-adenosyl-L-homocysteine. Functionally, specifically methylates position 2 of adenine 2503 in 23S rRNA and position 2 of adenine 37 in tRNAs. m2A2503 modification seems to play a crucial role in the proofreading step occurring at the peptidyl transferase center and thus would serve to optimize ribosomal fidelity. The protein is Dual-specificity RNA methyltransferase RlmN of Xanthomonas axonopodis pv. citri (strain 306).